The sequence spans 402 residues: Beta-1,4-galactosyltransferase 1 (402 aa).

Topologically, residues 1 to 24 (MKFREPLLGGSAAMPGASLQRACR) are cytoplasmic. A helical; Signal-anchor for type II membrane protein transmembrane segment spans residues 25–44 (LLVAVCALHLGVTLVYYLAG). The Lumenal segment spans residues 45–402 (RDLRRLPQLV…KITVDIGTPS (358 aa)). The interval 77 to 130 (LRLRGVAPPPPLQNSSKPRSRAPSNLDAYSHPGPGPGPGSNLTSAPVPSTTTRS) is disordered. N-linked (GlcNAc...) asparagine glycans are attached at residues N90 and N117. The segment covering 116–130 (SNLTSAPVPSTTTRS) has biased composition (polar residues). C134 and C176 are joined by a disulfide. Residues 187–191 (PFRNR), 226–228 (FNR), 253–254 (VD), and W314 contribute to the UDP-alpha-D-galactose site. A disulfide bridge connects residues C247 and C266. D254 is a Mn(2+) binding site. 316–319 (GEDD) lines the N-acetyl-D-glucosamine pocket. H347 provides a ligand contact to Mn(2+). 347–349 (HSR) contacts UDP-alpha-D-galactose. R359 is a binding site for N-acetyl-D-glucosamine.

This sequence belongs to the glycosyltransferase 7 family. Homodimer; and heterodimer with alpha-lactalbumin to form lactose synthase. Interacts (via N-terminal cytoplasmic domain) with UBE2Q1 (via N-terminus); the interaction is direct. Requires Mn(2+) as cofactor. Post-translationally, the soluble form derives from the membrane forms by proteolytic processing. Detected in milk (at protein level).

The protein localises to the golgi apparatus. It localises to the golgi stack membrane. It is found in the cell membrane. Its subcellular location is the cell surface. The protein resides in the cell projection. The protein localises to the filopodium. It localises to the secreted. The catalysed reaction is D-glucose + UDP-alpha-D-galactose = lactose + UDP + H(+). It carries out the reaction an N-acetyl-beta-D-glucosaminyl derivative + UDP-alpha-D-galactose = a beta-D-galactosyl-(1-&gt;4)-N-acetyl-beta-D-glucosaminyl derivative + UDP + H(+). The enzyme catalyses N-acetyl-D-glucosamine + UDP-alpha-D-galactose = beta-D-galactosyl-(1-&gt;4)-N-acetyl-D-glucosamine + UDP + H(+). It catalyses the reaction a beta-D-GlcNAc-(1-&gt;3)-beta-D-Gal-(1-&gt;4)-beta-D-Glc-(1&lt;-&gt;1)-Cer(d18:1(4E)) + UDP-alpha-D-galactose = a neolactoside nLc4Cer(d18:1(4E)) + UDP + H(+). The catalysed reaction is a beta-D-glucosylceramide + UDP-alpha-D-galactose = a beta-D-galactosyl-(1-&gt;4)-beta-D-glucosyl-(1&lt;-&gt;1)-ceramide + UDP + H(+). It carries out the reaction a neolactoside IV(3)-beta-GlcNAc-nLc4Cer + UDP-alpha-D-galactose = a neolactoside nLc6Cer + UDP + H(+). The protein operates within protein modification; protein glycosylation. Functionally, the Golgi complex form catalyzes the production of lactose in the lactating mammary gland and could also be responsible for the synthesis of complex-type N-linked oligosaccharides in many glycoproteins as well as the carbohydrate moieties of glycolipids. In terms of biological role, the cell surface form functions as a recognition molecule during a variety of cell to cell and cell to matrix interactions, as those occurring during development and egg fertilization, by binding to specific oligosaccharide ligands on opposing cells or in the extracellular matrix. The secreted form is responsible for the synthesis of complex-type to N-linked oligosaccharides in many glycoproteins as well as the carbohydrate moieties of glycolipids. This is Beta-1,4-galactosyltransferase 1 (B4GALT1) from Bos taurus (Bovine).